Consider the following 241-residue polypeptide: B9 domain-containing protein 1 (241 aa).

Residues 1–42 form a disordered region; that stretch reads MSASEGISLPGNEETTPPHEKHKQKAKKAKKKSRSAKESVPN. A compositionally biased stretch (basic residues) spans 20–34; sequence EKHKQKAKKAKKKSR. Residues 53–197 enclose the C2 B9-type domain; it reads FSLSIVGQIV…TSWLLRREPE (145 aa).

This sequence belongs to the B9D family. Probable component of the tectonic-like complex (also named MKS complex), composed of B9d1, B9d2, Cc2d2a, Mks1 and tctn. As to expression, expressed in type I sensory neurons (at protein level). Expressed in spermatids and spermatocytes (at protein level).

Its subcellular location is the cytoplasm. It localises to the cytoskeleton. The protein localises to the cilium basal body. Functionally, probable component of the tectonic-like complex (also named MKS complex), a complex localized at the transition zone of primary cilia. Required for ciliary structure and function. The protein is B9 domain-containing protein 1 of Drosophila melanogaster (Fruit fly).